The primary structure comprises 274 residues: Ribosomal RNA small subunit methyltransferase A (274 aa).

S-adenosyl-L-methionine is bound by residues H15, L17, G42, E64, D89, and N108.

The protein belongs to the class I-like SAM-binding methyltransferase superfamily. rRNA adenine N(6)-methyltransferase family. RsmA subfamily.

It localises to the cytoplasm. The enzyme catalyses adenosine(1518)/adenosine(1519) in 16S rRNA + 4 S-adenosyl-L-methionine = N(6)-dimethyladenosine(1518)/N(6)-dimethyladenosine(1519) in 16S rRNA + 4 S-adenosyl-L-homocysteine + 4 H(+). Functionally, specifically dimethylates two adjacent adenosines (A1518 and A1519) in the loop of a conserved hairpin near the 3'-end of 16S rRNA in the 30S particle. May play a critical role in biogenesis of 30S subunits. The chain is Ribosomal RNA small subunit methyltransferase A from Prochlorococcus marinus (strain MIT 9301).